The chain runs to 351 residues: Mannonate dehydratase (351 aa).

It belongs to the mannonate dehydratase family. It depends on Fe(2+) as a cofactor. Mn(2+) serves as cofactor.

The enzyme catalyses D-mannonate = 2-dehydro-3-deoxy-D-gluconate + H2O. It participates in carbohydrate metabolism; pentose and glucuronate interconversion. Functionally, catalyzes the dehydration of D-mannonate. This is Mannonate dehydratase from Clostridium acetobutylicum (strain ATCC 824 / DSM 792 / JCM 1419 / IAM 19013 / LMG 5710 / NBRC 13948 / NRRL B-527 / VKM B-1787 / 2291 / W).